The chain runs to 210 residues: Adenylate kinase (210 aa).

10–15 is a binding site for ATP; it reads GSGKGT. The segment at 30–54 is NMP; it reads SCGDILRKQNKCCDINKLIKKGELI. Residues arginine 36, 52–54, 80–83, and glutamine 87 contribute to the AMP site; these read ELI and GFPR. The tract at residues 117-154 is LID; the sequence is GRIIDKVSGEIYHLKFNPPKFITEKSNKNKILVRRLDD. ATP-binding positions include arginine 118 and 127 to 128; that span reads IY. Arginine 151 and arginine 162 together coordinate AMP. Position 195 (phenylalanine 195) interacts with ATP.

It belongs to the adenylate kinase family. As to quaternary structure, monomer.

Its subcellular location is the cytoplasm. The catalysed reaction is AMP + ATP = 2 ADP. The protein operates within purine metabolism; AMP biosynthesis via salvage pathway; AMP from ADP: step 1/1. Functionally, catalyzes the reversible transfer of the terminal phosphate group between ATP and AMP. Plays an important role in cellular energy homeostasis and in adenine nucleotide metabolism. This Wigglesworthia glossinidia brevipalpis protein is Adenylate kinase.